The following is a 1125-amino-acid chain: Transcription-repair-coupling factor (1125 aa).

The Helicase ATP-binding domain occupies 597-758 (DMMSFKVMDR…LIKLRDISVL (162 aa)). 610–617 (GDVGFGKT) is an ATP binding site. Residues 711-714 (DEEQ) carry the DEEQ box motif. Residues 774–933 (SFSELLIKHA…GFKIAMKDME (160 aa)) enclose the Helicase C-terminal domain.

The protein in the N-terminal section; belongs to the UvrB family. This sequence in the C-terminal section; belongs to the helicase family. RecG subfamily.

Its subcellular location is the cytoplasm. In terms of biological role, couples transcription and DNA repair by recognizing RNA polymerase (RNAP) stalled at DNA lesions. Mediates ATP-dependent release of RNAP and its truncated transcript from the DNA, and recruitment of nucleotide excision repair machinery to the damaged site. This chain is Transcription-repair-coupling factor, found in Borreliella burgdorferi (strain ATCC 35210 / DSM 4680 / CIP 102532 / B31) (Borrelia burgdorferi).